A 218-amino-acid chain; its full sequence is Protein N-lysine methyltransferase METTL21A (218 aa).

Residues Trp47, 73-75 (GAG), Asp94, Trp125, and Ala143 each bind S-adenosyl-L-methionine.

The protein belongs to the methyltransferase superfamily. METTL21 family. In terms of assembly, interacts with heat shock 70 family members; at least some of these proteins are methylation substrates.

It is found in the cytoplasm. The catalysed reaction is L-lysyl-[protein] + 3 S-adenosyl-L-methionine = N(6),N(6),N(6)-trimethyl-L-lysyl-[protein] + 3 S-adenosyl-L-homocysteine + 3 H(+). Functionally, protein-lysine methyltransferase that selectively trimethylates residues in heat shock protein 70 (HSP70) family members. Contributes to the in vivo trimethylation of Lys residues in HSPA1 and HSPA8. In vitro methylates 'Lys-561' in HSPA1, 'Lys-564' in HSPA2, 'Lys-585' in HSPA5, 'Lys-563' in HSPA6 and 'Lys-561' in HSPA8. This chain is Protein N-lysine methyltransferase METTL21A (METTL21A), found in Bos taurus (Bovine).